Consider the following 186-residue polypeptide: Casparian strip membrane protein 6 (186 aa).

Residues 1–23 are Cytoplasmic-facing; sequence MKAGPIELGEGKSSAPKAAVNRG. A helical membrane pass occupies residues 24-44; that stretch reads VAILDFILRILAFIGTLGSAI. Topologically, residues 45-73 are extracellular; sequence SMATTNETLPFFTQFIRFRAEYDDLPTFT. An N-linked (GlcNAc...) asparagine glycan is attached at Asn-50. A helical transmembrane segment spans residues 74–94; it reads FFVVANGVVSAYLLFSLPFSI. Residues 95 to 106 are Cytoplasmic-facing; the sequence is FNIVRSKAQNSR. The helical transmembrane segment at 107–127 threads the bilayer; that stretch reads ILLIILDTAMLGLLSAGASAA. Topologically, residues 128 to 160 are extracellular; that stretch reads AAIVYLAHQGNVRTNWSAICQQFNSFCERISGS. N-linked (GlcNAc...) asparagine glycosylation occurs at Asn-142. Residues 161–181 form a helical membrane-spanning segment; it reads LIGSFIGVVVFILLISLSAVA. The Cytoplasmic portion of the chain corresponds to 182–186; sequence LSRHK.

This sequence belongs to the Casparian strip membrane proteins (CASP) family. As to quaternary structure, homodimer and heterodimers.

It localises to the cell membrane. In terms of biological role, regulates membrane-cell wall junctions and localized cell wall deposition. Required for establishment of the Casparian strip membrane domain (CSD) and the subsequent formation of Casparian strips, a cell wall modification of the root endodermis that determines an apoplastic barrier between the intraorganismal apoplasm and the extraorganismal apoplasm and prevents lateral diffusion. In Populus trichocarpa (Western balsam poplar), this protein is Casparian strip membrane protein 6.